The primary structure comprises 636 residues: uncharacterized protein (636 aa).

This is an uncharacterized protein from Bacillus subtilis (strain 168).